Reading from the N-terminus, the 725-residue chain is Glyoxysomal fatty acid beta-oxidation multifunctional protein MFP-a (725 aa).

In the N-terminal section; belongs to the enoyl-CoA hydratase/isomerase family. It in the central section; belongs to the 3-hydroxyacyl-CoA dehydrogenase family.

The protein resides in the glyoxysome. The catalysed reaction is a (3S)-3-hydroxyacyl-CoA = a (2E)-enoyl-CoA + H2O. It carries out the reaction a 4-saturated-(3S)-3-hydroxyacyl-CoA = a (3E)-enoyl-CoA + H2O. The enzyme catalyses a (3Z)-enoyl-CoA = a 4-saturated (2E)-enoyl-CoA. It catalyses the reaction a (3E)-enoyl-CoA = a 4-saturated (2E)-enoyl-CoA. The catalysed reaction is (3S)-3-hydroxybutanoyl-CoA = (3R)-3-hydroxybutanoyl-CoA. It carries out the reaction a (3S)-3-hydroxyacyl-CoA + NAD(+) = a 3-oxoacyl-CoA + NADH + H(+). It functions in the pathway lipid metabolism; fatty acid beta-oxidation. This is Glyoxysomal fatty acid beta-oxidation multifunctional protein MFP-a from Cucumis sativus (Cucumber).